The chain runs to 605 residues: uncharacterized protein (605 aa).

The interval 22–93 (FTEPARFYPS…KQGTAVHGAE (72 aa)) is disordered. Positions 46 to 57 (SENASSSVPSHS) are enriched in low complexity.

This is an uncharacterized protein from Treponema pallidum (strain Nichols).